A 463-amino-acid chain; its full sequence is Probable Xaa-Pro aminopeptidase PEPP (463 aa).

Mn(2+) is bound by residues aspartate 259, aspartate 270, glutamate 393, and glutamate 433.

It belongs to the peptidase M24B family. Requires Mn(2+) as cofactor.

It catalyses the reaction Release of any N-terminal amino acid, including proline, that is linked to proline, even from a dipeptide or tripeptide.. Catalyzes the removal of a penultimate prolyl residue from the N-termini of peptides. The sequence is that of Probable Xaa-Pro aminopeptidase PEPP (PEPP) from Phaeosphaeria nodorum (strain SN15 / ATCC MYA-4574 / FGSC 10173) (Glume blotch fungus).